The primary structure comprises 501 residues: Trans-cinnamate 4-monooxygenase (501 aa).

The chain crosses the membrane as a helical span at residues 3–23; it reads LVLLEKALLGLFAAAVLAVAV. Residues 213–218 and A302 each bind (E)-cinnamate; that span reads RSRLSQ. C443 lines the heme pocket.

Belongs to the cytochrome P450 family. Heme is required as a cofactor.

It localises to the membrane. The catalysed reaction is (E)-cinnamate + reduced [NADPH--hemoprotein reductase] + O2 = (E)-4-coumarate + oxidized [NADPH--hemoprotein reductase] + H2O + H(+). It functions in the pathway phenylpropanoid metabolism; trans-4-coumarate biosynthesis; trans-4-coumarate from trans-cinnamate: step 1/1. Catalyzes the first oxidative step of the phenylpropanoid pathway in higher plants by transforming trans-cinnamate into p-coumarate. The compounds formed by this pathway are essential components for lignification, pollination, and defense against ultraviolet light, predators and pathogens. Can also use 2-naphthoic acid as substrate. The sequence is that of Trans-cinnamate 4-monooxygenase from Sorghum bicolor (Sorghum).